The sequence spans 358 residues: Homoserine O-acetyltransferase (358 aa).

The region spanning 41-343 (NAVLICHALT…DYGHDAFLVD (303 aa)) is the AB hydrolase-1 domain. The Nucleophile role is filled by S143. R212 contacts substrate. Residues D304 and H337 contribute to the active site. D338 serves as a coordination point for substrate.

Homodimer.

It localises to the cytoplasm. The catalysed reaction is L-homoserine + acetyl-CoA = O-acetyl-L-homoserine + CoA. It participates in amino-acid biosynthesis; L-methionine biosynthesis via de novo pathway; O-acetyl-L-homoserine from L-homoserine: step 1/1. Functionally, transfers an acetyl group from acetyl-CoA to L-homoserine, forming acetyl-L-homoserine. Utilizes a ping-pong kinetic mechanism in which the acetyl group of acetyl-CoA is initially transferred to the enzyme to form an acetyl-enzyme intermediate before subsequent transfer to homoserine to form the final product, O-acetylhomoserine. This is Homoserine O-acetyltransferase from Haemophilus influenzae (strain ATCC 51907 / DSM 11121 / KW20 / Rd).